The chain runs to 352 residues: Putative squamosa promoter-binding-like protein 19 (352 aa).

Positions 68-88 are disordered; that stretch reads AAAPATRRARGGSGGGGGGGG. Residues 78–88 are compositionally biased toward gly residues; it reads GGSGGGGGGGG. Residues 90 to 167 form an SBP-type zinc finger; sequence AEACSVDGCR…DGHNRRRRKP (78 aa). Positions 93, 98, 115, 118, 134, 137, 141, and 153 each coordinate Zn(2+). The short motif at 150-166 is the Bipartite nuclear localization signal element; the sequence is KKSCRKRLDGHNRRRRK. Residues 152-174 form a disordered region; sequence SCRKRLDGHNRRRRKPQHDALNP.

It localises to the nucleus. Functionally, trans-acting factor that binds specifically to the consensus nucleotide sequence 5'-TNCGTACAA-3'. The polypeptide is Putative squamosa promoter-binding-like protein 19 (SPL19) (Oryza sativa subsp. japonica (Rice)).